Consider the following 75-residue polypeptide: U6-lycotoxin-Ls1a (75 aa).

Positions 1-21 (MKLLLFTALVLVVISLIEVEA) are cleaved as a signal peptide. Positions 22–25 (ENER) are excised as a propeptide.

This sequence belongs to the neurotoxin 19 (CSTX) family. 06 (U6-Lctx) subfamily. In terms of processing, contains 4 disulfide bonds. Expressed by the venom gland.

It localises to the secreted. This chain is U6-lycotoxin-Ls1a, found in Lycosa singoriensis (Wolf spider).